Reading from the N-terminus, the 180-residue chain is Large ribosomal subunit protein uL6 (180 aa).

It belongs to the universal ribosomal protein uL6 family. As to quaternary structure, part of the 50S ribosomal subunit.

Its function is as follows. This protein binds to the 23S rRNA, and is important in its secondary structure. It is located near the subunit interface in the base of the L7/L12 stalk, and near the tRNA binding site of the peptidyltransferase center. The protein is Large ribosomal subunit protein uL6 of Desulforapulum autotrophicum (strain ATCC 43914 / DSM 3382 / VKM B-1955 / HRM2) (Desulfobacterium autotrophicum).